A 422-amino-acid polypeptide reads, in one-letter code: UDP-N-acetylglucosamine 1-carboxyvinyltransferase (422 aa).

Position 22–23 (22–23 (KN)) interacts with phosphoenolpyruvate. R93 provides a ligand contact to UDP-N-acetyl-alpha-D-glucosamine. C117 serves as the catalytic Proton donor. 2-(S-cysteinyl)pyruvic acid O-phosphothioketal is present on C117. Residues 122 to 126 (RPVDL), D308, and L330 contribute to the UDP-N-acetyl-alpha-D-glucosamine site.

It belongs to the EPSP synthase family. MurA subfamily.

It is found in the cytoplasm. The enzyme catalyses phosphoenolpyruvate + UDP-N-acetyl-alpha-D-glucosamine = UDP-N-acetyl-3-O-(1-carboxyvinyl)-alpha-D-glucosamine + phosphate. It participates in cell wall biogenesis; peptidoglycan biosynthesis. Functionally, cell wall formation. Adds enolpyruvyl to UDP-N-acetylglucosamine. In Helicobacter pylori (strain HPAG1), this protein is UDP-N-acetylglucosamine 1-carboxyvinyltransferase.